A 462-amino-acid polypeptide reads, in one-letter code: Phosphoglucosamine mutase (462 aa).

The Phosphoserine intermediate role is filled by Ser-112. Residues Ser-112, Asp-250, Asp-252, and Asp-254 each contribute to the Mg(2+) site. Ser-112 carries the phosphoserine modification.

Belongs to the phosphohexose mutase family. Mg(2+) is required as a cofactor. Post-translationally, activated by phosphorylation.

It carries out the reaction alpha-D-glucosamine 1-phosphate = D-glucosamine 6-phosphate. Its function is as follows. Catalyzes the conversion of glucosamine-6-phosphate to glucosamine-1-phosphate. The protein is Phosphoglucosamine mutase of Parasynechococcus marenigrum (strain WH8102).